The sequence spans 728 residues: Catalase-peroxidase 2 (728 aa).

The segment at residues Trp-91–Tyr-214 is a cross-link (tryptophyl-tyrosyl-methioninium (Trp-Tyr) (with M-240)). His-92 functions as the Proton acceptor in the catalytic mechanism. A cross-link (tryptophyl-tyrosyl-methioninium (Tyr-Met) (with W-91)) is located at residues Tyr-214 to Met-240. His-255 provides a ligand contact to heme b. The segment at Trp-338–Thr-362 is disordered.

The protein belongs to the peroxidase family. Peroxidase/catalase subfamily. In terms of assembly, homodimer or homotetramer. Heme b serves as cofactor. Post-translationally, formation of the three residue Trp-Tyr-Met cross-link is important for the catalase, but not the peroxidase activity of the enzyme.

It catalyses the reaction H2O2 + AH2 = A + 2 H2O. The enzyme catalyses 2 H2O2 = O2 + 2 H2O. Its function is as follows. Bifunctional enzyme with both catalase and broad-spectrum peroxidase activity. The chain is Catalase-peroxidase 2 from Cupriavidus pinatubonensis (strain JMP 134 / LMG 1197) (Cupriavidus necator (strain JMP 134)).